The following is a 332-amino-acid chain: L-lactate dehydrogenase A chain (332 aa).

NAD(+)-binding positions include 29 to 57 (GAVGMACAISILMKDLADELALVDVIEDK) and Arg99. The substrate site is built by Arg106, Asn138, and Arg169. NAD(+) is bound at residue Asn138. The Proton acceptor role is filled by His193. Residue Thr248 participates in substrate binding.

It belongs to the LDH/MDH superfamily. LDH family. In terms of assembly, homotetramer.

Its subcellular location is the cytoplasm. The catalysed reaction is (S)-lactate + NAD(+) = pyruvate + NADH + H(+). The protein operates within fermentation; pyruvate fermentation to lactate; (S)-lactate from pyruvate: step 1/1. In terms of biological role, interconverts simultaneously and stereospecifically pyruvate and lactate with concomitant interconversion of NADH and NAD(+). This is L-lactate dehydrogenase A chain (LDHA) from Sceloporus woodi (Florida scrub lizard).